Here is a 361-residue protein sequence, read N- to C-terminus: S-adenosylmethionine-dependent nucleotide dehydratase RSAD2 (361 aa).

The 221-residue stretch at 69-289 (PTTPTSVNYH…LERHKEVSCL (221 aa)) folds into the Radical SAM core domain. Residues Cys83, Cys87, and Cys90 each contribute to the [4Fe-4S] cluster site. At Lys197 the chain carries N6-acetyllysine. Residue Lys206 forms a Glycyl lysine isopeptide (Lys-Gly) (interchain with G-Cter in ubiquitin) linkage.

Belongs to the radical SAM superfamily. RSAD2 family. Homodimer. Interacts with IRAK1 and TRAF6. Interacts with FPPS. Interacts with HADHB. Interacts (via C-terminus) with VAPA/VAP33 (via C-terminus). As to quaternary structure, (Microbial infection) Interacts with human cytomegalovirus/HHV-5 protein vMIA/UL37; this interaction results in RSAD2/viperin relocalization from the endoplasmic reticulum to the mitochondria. In terms of assembly, (Microbial infection) Interacts (via N-terminus) with enterovirus A71 protein 2C; this interaction inhibits viral replication. (Microbial infection) Interacts with herpes simplex virus 1/HHV-1 glycoprotein D; this interaction inhibits HHV-1 replication by facilitating IRF7-mediated IFN-beta production. [4Fe-4S] cluster serves as cofactor. In terms of processing, acetylated by HAT1. HAT1-mediated acetylation of Lys-197 in turn recruits UBE4A that stimulates RSAD2 polyubiquitination leading to proteasomal degradation. Post-translationally, 'Lys-6'-linked polyubiquitination at Lys-206 leads to RSAD2 protein degradation.

The protein localises to the endoplasmic reticulum membrane. It is found in the golgi apparatus. The protein resides in the endoplasmic reticulum. It localises to the lipid droplet. Its subcellular location is the mitochondrion. The protein localises to the mitochondrion inner membrane. It is found in the mitochondrion outer membrane. It carries out the reaction CTP + AH2 + S-adenosyl-L-methionine = 3'-deoxy-3',4'-didehydro-CTP + 5'-deoxyadenosine + L-methionine + A + H2O + H(+). Its activity is regulated as follows. IRAK1 and TRAF6 synergistically activate RSAD2 increasing its activity with CTP as substrate about 10-fold. Its function is as follows. Interferon-inducible antiviral protein which plays a major role in the cell antiviral state induced by type I and type II interferon. Catalyzes the conversion of cytidine triphosphate (CTP) to 3'-deoxy-3',4'-didehydro-CTP (ddhCTP) via a SAM-dependent radical mechanism. In turn, ddhCTP acts as a chain terminator for the RNA-dependent RNA polymerases from multiple viruses and directly inhibits viral replication. Therefore, inhibits a wide range of DNA and RNA viruses, including human cytomegalovirus (HCMV), hepatitis C virus (HCV), west Nile virus (WNV), dengue virus, sindbis virus, influenza A virus, sendai virus, vesicular stomatitis virus (VSV), zika virus, and human immunodeficiency virus (HIV-1). Also promotes TLR7 and TLR9-dependent production of IFN-beta production in plasmacytoid dendritic cells (pDCs) by facilitating 'Lys-63'-linked ubiquitination of IRAK1 by TRAF6. Plays a role in CD4+ T-cells activation and differentiation. Facilitates T-cell receptor (TCR)-mediated GATA3 activation and optimal T-helper 2 (Th2) cytokine production by modulating NFKB1 and JUNB activities. Can inhibit secretion of soluble proteins. The chain is S-adenosylmethionine-dependent nucleotide dehydratase RSAD2 from Homo sapiens (Human).